A 378-amino-acid polypeptide reads, in one-letter code: Ecotin-like protein 3 (378 aa).

Disordered stretches follow at residues 191–216 (HRLS…HAAP) and 238–378 (PQNN…KADP). Residues 274 to 287 (NEPSPSRPRLSSTE) show a composition bias toward polar residues. The span at 337–348 (RKAEDNVYEKTM) shows a compositional bias: basic and acidic residues. Residues 362–378 (KASASSKKSGNGSKADP) show a composition bias toward low complexity.

The protein belongs to the protease inhibitor I11 (ecotin) family.

This Leishmania infantum protein is Ecotin-like protein 3.